A 169-amino-acid chain; its full sequence is Required for excision 1-B domain-containing protein (169 aa).

This chain is Required for excision 1-B domain-containing protein, found in Mus musculus (Mouse).